Consider the following 185-residue polypeptide: Probable prefoldin subunit 3 (185 aa).

Belongs to the prefoldin subunit alpha family. Heterohexamer of two PFD-alpha type and four PFD-beta type subunits.

Its function is as follows. Binds specifically to cytosolic chaperonin (c-CPN) and transfers target proteins to it. Binds to nascent polypeptide chain and promotes folding in an environment in which there are many competing pathways for nonnative proteins. This chain is Probable prefoldin subunit 3 (pfd-3), found in Caenorhabditis elegans.